Consider the following 102-residue polypeptide: Large ribosomal subunit protein bL21 (102 aa).

It belongs to the bacterial ribosomal protein bL21 family. As to quaternary structure, part of the 50S ribosomal subunit. Contacts protein L20.

This protein binds to 23S rRNA in the presence of protein L20. In Zymomonas mobilis subsp. mobilis (strain ATCC 31821 / ZM4 / CP4), this protein is Large ribosomal subunit protein bL21.